We begin with the raw amino-acid sequence, 912 residues long: Multiple C2 and transmembrane domain-containing protein (912 aa).

A compositionally biased stretch (low complexity) spans 1–33 (MSRIQYVDQVDQVELDQQQQPGSSSTVSGSTPP). Disordered stretches follow at residues 1-80 (MSRI…KRAK) and 145-165 (SSEG…IGGS). The span at 38–49 (PHGSPSLQQSQR) shows a compositional bias: polar residues. 3 consecutive C2 domains span residues 218-337 (QANE…HLQL), 371-493 (RNSK…HLML), and 522-637 (ERYK…TLKD). Residues aspartate 252, aspartate 258, aspartate 305, aspartate 307, and aspartate 313 each coordinate Ca(2+). The Ca(2+) site is built by aspartate 553, aspartate 559, aspartate 605, and aspartate 607. Helical transmembrane passes span 729-749 (IVAC…LIIL) and 826-846 (LTWL…FVPL). The tract at residues 887 to 912 (NQYRELPPSAPTDQTRNNPKKKLKGS) is disordered.

Ca(2+) is required as a cofactor. As to expression, motor neurons (at protein level).

The protein resides in the endoplasmic reticulum membrane. Functionally, calcium sensor which is essential for the stabilization of normal baseline neurotransmitter release and for the induction and long-term maintenance of presynaptic homeostatic plasticity. The sequence is that of Multiple C2 and transmembrane domain-containing protein from Drosophila melanogaster (Fruit fly).